Consider the following 529-residue polypeptide: Autoinducer-2 kinase (529 aa).

It belongs to the FGGY kinase family.

It is found in the cytoplasm. It carries out the reaction (S)-4,5-dihydroxypentane-2,3-dione + ATP = (2S)-2-hydroxy-3,4-dioxopentyl phosphate + ADP + H(+). Catalyzes the phosphorylation of autoinducer-2 (AI-2) to phospho-AI-2, which subsequently inactivates the transcriptional regulator LsrR and leads to the transcription of the lsr operon. Phosphorylates the ring-open form of (S)-4,5-dihydroxypentane-2,3-dione (DPD), which is the precursor to all AI-2 signaling molecules, at the C5 position. This is Autoinducer-2 kinase from Yersinia enterocolitica serotype O:8 / biotype 1B (strain NCTC 13174 / 8081).